The chain runs to 93 residues: Late embryogenesis abundant protein B19.1A (93 aa).

Residues 1–93 (MASGQQERSQ…IDESKFKTKS (93 aa)) form a disordered region. Composition is skewed to basic and acidic residues over residues 9-19 (SQLDRKAREGE) and 73-93 (GGER…KTKS).

The protein belongs to the small hydrophilic plant seed protein family. In terms of tissue distribution, embryos and young seedlings.

Its function is as follows. Lea proteins are late embryonic proteins abundant in higher plant seed embryos. It may have a role in desiccation tolerance by acting as an osmoprotective protein or as a desiccation-damage repair protein. This Hordeum vulgare (Barley) protein is Late embryogenesis abundant protein B19.1A (B19.1A).